The following is a 158-amino-acid chain: uncharacterized protein (158 aa).

Positions 1-16 (MFRPILILTILSCVLA) are cleaved as a signal peptide. Residue N122 is glycosylated (N-linked (GlcNAc...) asparagine).

This is an uncharacterized protein from Caenorhabditis elegans.